The sequence spans 256 residues: F-actin-capping protein subunit beta (256 aa).

Met-1 bears the N-acetylmethionine mark.

It belongs to the F-actin-capping protein beta subunit family. As to quaternary structure, component of the F-actin capping complex, composed of a heterodimer of an alpha and a beta subunit.

The protein localises to the cytoplasm. It localises to the cytoskeleton. Its function is as follows. F-actin-capping proteins bind in a Ca(2+)-independent manner to the fast growing ends of actin filaments (barbed end) thereby blocking the exchange of subunits at these ends. Unlike other capping proteins (such as gelsolin and severin), these proteins do not sever actin filaments. The sequence is that of F-actin-capping protein subunit beta from Arabidopsis thaliana (Mouse-ear cress).